The following is a 506-amino-acid chain: Anaerobic nitric oxide reductase transcription regulator NorR (506 aa).

At D57 the chain carries 4-aspartylphosphate. In terms of domain architecture, Sigma-54 factor interaction spans M187 to V416. ATP contacts are provided by residues G215–E222 and A278–E287. The H-T-H motif DNA-binding region spans W481 to K500.

Its pathway is nitrogen metabolism; nitric oxide reduction. In terms of biological role, required for the expression of anaerobic nitric oxide (NO) reductase, acts as a transcriptional activator for at least the norVW operon. Activation also requires sigma-54. In Salmonella paratyphi C (strain RKS4594), this protein is Anaerobic nitric oxide reductase transcription regulator NorR.